We begin with the raw amino-acid sequence, 170 residues long: Small ribosomal subunit protein mS25 (170 aa).

The protein belongs to the mitochondrion-specific ribosomal protein mS25 family. In terms of assembly, component of the mitochondrial ribosome small subunit (28S) which comprises a 12S rRNA and about 30 distinct proteins.

Its subcellular location is the mitochondrion. This is Small ribosomal subunit protein mS25 (mrps-25) from Caenorhabditis elegans.